A 440-amino-acid polypeptide reads, in one-letter code: Gamma-aminobutyric acid receptor subunit pi (440 aa).

Residues 1-23 (MSYSLYLAFLCLSLLTQRTCIQG) form the signal peptide. Topologically, residues 24–241 (NQVNVEVSRS…LVLQFELRRN (218 aa)) are extracellular. N-linked (GlcNAc...) asparagine glycans are attached at residues N43, N102, and N145. An intrachain disulfide couples C160 to C174. N196 and N228 each carry an N-linked (GlcNAc...) asparagine glycan. Residues 242 to 262 (VLYFILETYVPSTFLVVLSWV) form a helical membrane-spanning segment. At 263-270 (SFWISLDS) the chain is on the cytoplasmic side. A helical membrane pass occupies residues 271–290 (VPARTCIGVTTVLSMTTLMI). Topologically, residues 291–301 (GSRTSLPNTNC) are extracellular. Residues 302-322 (FIKAIDVYLGICFSFVFGALL) form a helical membrane-spanning segment. The Cytoplasmic segment spans residues 323 to 419 (EYAVAHYSSL…NPSNVDRYSK (97 aa)). The chain crosses the membrane as a helical span at residues 420–440 (LLFPLIFMLANVFYWAYYMYF).

The protein belongs to the ligand-gated ion channel (TC 1.A.9) family. Gamma-aminobutyric acid receptor (TC 1.A.9.5) subfamily. GABRP sub-subfamily. Heteropentamer, formed by a combination of alpha (GABRA1-6), beta (GABRB1-3), gamma (GABRG1-3), delta (GABRD), epsilon (GABRE), rho (GABRR1-3), pi (GABRP) and theta (GABRQ) chains, each subunit exhibiting distinct physiological and pharmacological properties.

The protein resides in the cell membrane. It localises to the apical cell membrane. The enzyme catalyses chloride(in) = chloride(out). Its function is as follows. Pi subunit of the heteropentameric ligand-gated chloride channel gated by gamma-aminobutyric acid (GABA). GABA-gated chloride channels, also named GABA(A) receptors (GABAAR), consist of five subunits arranged around a central pore and contain GABA active binding site(s) located at the alpha and beta subunit interfaces. When activated by GABA, GABAARs selectively allow the flow of chloride anions across the cell membrane down their electrochemical gradient. Pi-containing GABAARs are mostly located in peripheral tissues. In the uterus, pi subunits modulate uterus contraction by altering the sensitivity of GABAARs to pregnanolone. In the lungs, pi-containing GABAARs contribute to pulmonary fluid transport via luminal secretion of chloride. In Mus musculus (Mouse), this protein is Gamma-aminobutyric acid receptor subunit pi.